The sequence spans 64 residues: Sperm protamine P1 (64 aa).

Residues 1–64 are disordered; it reads MVRYRRHSRS…QSRRRRRRRY (64 aa).

This sequence belongs to the protamine P1 family. Testis.

The protein resides in the nucleus. The protein localises to the chromosome. In terms of biological role, protamines substitute for histones in the chromatin of sperm during the haploid phase of spermatogenesis. They compact sperm DNA into a highly condensed, stable and inactive complex. The sequence is that of Sperm protamine P1 (PRM1) from Dromiciops gliroides (Monito del Monte).